A 91-amino-acid polypeptide reads, in one-letter code: MARVTVQDAVEKIGNRFDLVLVAARRARQLQTGGKDPLVPEENDKYTVIALREIEDGLINNQILDVRDRQEQQEQEAAEIQAVTAIAEGRR.

It belongs to the RNA polymerase subunit omega family. The RNAP catalytic core consists of 2 alpha, 1 beta, 1 beta' and 1 omega subunit. When a sigma factor is associated with the core the holoenzyme is formed, which can initiate transcription.

The catalysed reaction is RNA(n) + a ribonucleoside 5'-triphosphate = RNA(n+1) + diphosphate. Its function is as follows. Promotes RNA polymerase assembly. Latches the N- and C-terminal regions of the beta' subunit thereby facilitating its interaction with the beta and alpha subunits. This chain is DNA-directed RNA polymerase subunit omega, found in Pectobacterium atrosepticum (strain SCRI 1043 / ATCC BAA-672) (Erwinia carotovora subsp. atroseptica).